A 118-amino-acid polypeptide reads, in one-letter code: UPF0125 protein RSc1426 (118 aa).

The protein belongs to the UPF0125 (RnfH) family.

This Ralstonia nicotianae (strain ATCC BAA-1114 / GMI1000) (Ralstonia solanacearum) protein is UPF0125 protein RSc1426.